The sequence spans 1201 residues: Vitamin B12-dependent ribonucleotide reductase (1201 aa).

Substrate contacts are provided by residues Ser-153, 198-199, Gly-230, 482-486, and 683-687; these read AC, NPCSE, and PTGTI. A disulfide bond links Cys-199 and Cys-495. Catalysis depends on Asn-482, which acts as the Proton acceptor. The active-site Cysteine radical intermediate is the Cys-484. The active-site Proton acceptor is Glu-486. Positions 1100–1118 are enriched in basic and acidic residues; that stretch reads DEIGSKRATAESNGQEKET. The interval 1100-1120 is disordered; it reads DEIGSKRATAESNGQEKETLS.

Belongs to the ribonucleoside diphosphate reductase class-2 family. Adenosylcob(III)alamin serves as cofactor.

The enzyme catalyses a 2'-deoxyribonucleoside 5'-diphosphate + [thioredoxin]-disulfide + H2O = a ribonucleoside 5'-diphosphate + [thioredoxin]-dithiol. Functionally, catalyzes the reduction of ribonucleotides to deoxyribonucleotides. May function to provide a pool of deoxyribonucleotide precursors for DNA repair during oxygen limitation and/or for immediate growth after restoration of oxygen. The sequence is that of Vitamin B12-dependent ribonucleotide reductase (nrdJ) from Leptospira interrogans serogroup Icterohaemorrhagiae serovar copenhageni (strain Fiocruz L1-130).